A 207-amino-acid chain; its full sequence is Small ribosomal subunit protein uS4 (207 aa).

The disordered stretch occupies residues 31–53 (KAKFDSKPGQHGRTSGARTSDFG). The 64-residue stretch at 97–160 (SRLDNVVYRM…KKQNRIVEAL (64 aa)) folds into the S4 RNA-binding domain.

This sequence belongs to the universal ribosomal protein uS4 family. Part of the 30S ribosomal subunit. Contacts protein S5. The interaction surface between S4 and S5 is involved in control of translational fidelity.

Functionally, one of the primary rRNA binding proteins, it binds directly to 16S rRNA where it nucleates assembly of the body of the 30S subunit. Its function is as follows. With S5 and S12 plays an important role in translational accuracy. In Albidiferax ferrireducens (strain ATCC BAA-621 / DSM 15236 / T118) (Rhodoferax ferrireducens), this protein is Small ribosomal subunit protein uS4.